An 820-amino-acid polypeptide reads, in one-letter code: Breast cancer anti-estrogen resistance protein 3 homolog (820 aa).

A2 is subject to N-acetylalanine. Residues S32, S72, S77, S176, and S284 each carry the phosphoserine modification. The segment at 40–81 (DAYQDVSIHGTLPRKKKGPPSIRSCDNAGHSKSPRQSSPLTQ) is disordered. The SH2 domain maps to 148–247 (WYHGRIPRQV…QSGAIIFQPI (100 aa)). N6-methyllysine is present on K329. A disordered region spans residues 346-367 (QSPSMDTSPCPSSPVFRTGSEP). Phosphoserine occurs at positions 353, 358, and 370. R437 carries the omega-N-methylarginine modification. S466 bears the Phosphoserine mark. Residues 543–813 (DARVIAQHML…TALSRKLEPP (271 aa)) enclose the Ras-GEF domain. Positions 739–743 (LATAR) are mediates the interaction with BCAR1/p130CAS.

In terms of assembly, part of a complex comprised of PTPRA, BCAR1, BCAR3 (via SH2 domain) and SRC; the formation of the complex is dependent on integrin mediated-tyrosine phosphorylation of PTPRA. Within the complex, interacts (via SH2 domain) with PTPRA (when phosphorylated on 'Tyr-825'). Interacts (via Ras-GEF domain) with BCAR1. Interacts (via Ras-GEF domain) with NEDD9. Interacts with PTK2B/FAK1. Interacts with PTPN1. Interacts (via SH2 domain) with EGFR (when tyrosine-phosphorylated). Phosphorylated on tyrosine residues. In terms of tissue distribution, abundantly expressed in the lung and brain, with lower expression in splenic lymphocytes and liver (at protein level). Expressed in splenic lymphocytes (at protein level). Expressed in the lymph node cortical region, periphery of the splenic white pulp and in alveolar lung fibroblasts. Expressed in epithelial cells in the lens equatorial region and early stage nucleated cortical lens fiber cells. Expressed in the thymus. Expressed in B-cells.

It is found in the cytoplasm. It localises to the cell junction. Its subcellular location is the focal adhesion. Its function is as follows. Acts as an adapter protein downstream of several growth factor receptors to promote cell proliferation, migration, and redistribution of actin fibers. Specifically involved in INS/insulin signaling pathway by mediating MAPK1/ERK2-MAPK3/ERK1 activation and DNA synthesis. Promotes insulin-mediated membrane ruffling. In response to vasoconstrictor peptide EDN1, involved in the activation of RAP1 downstream of PTK2B via interaction with phosphorylated BCAR1. Inhibits cell migration and invasion via regulation of TGFB-mediated matrix digestion, actin filament rearrangement, and inhibition of invadopodia activity. May inhibit TGFB-SMAD signaling, via facilitating BCAR1 and SMAD2 and/or SMAD3 interaction. Regulates EGF-induced DNA synthesis. Required for the maintenance of ocular lens morphology and structural integrity, potentially via regulation of focal adhesion complex signaling. Acts upstream of PTPRA to regulate the localization of BCAR1 and PTPRA to focal adhesions, via regulation of SRC-mediated phosphorylation of PTPRA. Positively regulates integrin-induced tyrosine phosphorylation of BCAR1. Acts as a guanine nucleotide exchange factor (GEF) for small GTPases RALA, RAP1A and RRAS. However, in a contrasting study, lacks GEF activity towards RAP1. The sequence is that of Breast cancer anti-estrogen resistance protein 3 homolog (Bcar3) from Mus musculus (Mouse).